The sequence spans 207 residues: LexA repressor (207 aa).

A DNA-binding region (H-T-H motif) is located at residues 28-48 (VREIGEAVGLASSFTVHGHLS). Catalysis depends on for autocatalytic cleavage activity residues serine 130 and lysine 168.

This sequence belongs to the peptidase S24 family. In terms of assembly, homodimer.

The catalysed reaction is Hydrolysis of Ala-|-Gly bond in repressor LexA.. Its function is as follows. Represses a number of genes involved in the response to DNA damage (SOS response), including recA and lexA. In the presence of single-stranded DNA, RecA interacts with LexA causing an autocatalytic cleavage which disrupts the DNA-binding part of LexA, leading to derepression of the SOS regulon and eventually DNA repair. The polypeptide is LexA repressor (Staphylococcus aureus (strain Newman)).